A 237-amino-acid polypeptide reads, in one-letter code: UPF0758 protein Veis_1654 (237 aa).

Positions 115 to 237 (VFDTPDAVKH…ALSMAEMGLL (123 aa)) constitute an MPN domain. His-186, His-188, and Asp-199 together coordinate Zn(2+). The short motif at 186 to 199 (HNHPSGSVQPSRAD) is the JAMM motif element.

It belongs to the UPF0758 family.

This is UPF0758 protein Veis_1654 from Verminephrobacter eiseniae (strain EF01-2).